The chain runs to 302 residues: GLABROUS1 enhancer-binding protein (302 aa).

Disordered regions lie at residues 1-55 (MVTP…MKKK) and 158-229 (GQGD…NDDD). The residue at position 27 (S27) is a Phosphoserine. Basic and acidic residues predominate over residues 180-195 (RTNESGEEMLKEHEEE). Polar residues predominate over residues 208–217 (AKTTENGTSS). Residues 270-291 (LSDEWKALCVEETRFNIKKLRF) are non-canonical leucine-zipper.

Belongs to the GeBP family. As to quaternary structure, homo- and heterodimers. Interacts with GPL1, GPL2 and GPL3. Interacts with KIN10, KIN11 and FLZ4. Interacts with KIN10 and KIN11 via its N-terminal part. Interacts with GPL1 and GPL3 via its C-terminal part. Expressed in the apical meristem and young leaf primordia. Not detected in emerging or mature leaves. Detected in the vascular tissues of cotyledons and leaves, in hydathodes and at the base of flowers and siliques, but not in roots.

The protein localises to the nucleus. It localises to the nucleolus. In terms of biological role, DNA-binding protein, which specifically recognizes the GL1 enhancer sequence. May be involved in leaf initiation. May play redundant roles with GPL1 and GPL2 in cytokinin responses by regulating the transcript levels of type-A ARR response genes. Involved in stress responses. Plays a repressive role in cell expansion by counteracting the positive role of CPR5 in this process, but does not regulate cell proliferation or endoreduplication. May play a role in plant defense. The polypeptide is GLABROUS1 enhancer-binding protein (Arabidopsis thaliana (Mouse-ear cress)).